Consider the following 155-residue polypeptide: Large ribosomal subunit protein eL24B (155 aa).

Residue S7 is modified to Phosphoserine. A disordered region spans residues 66–155; sequence EVAKKRSRKT…AFQKVAATSR (90 aa). Positions 89–129 are enriched in basic and acidic residues; it reads LIKERRSLKPEVRKANREEKLKANKEKKRAEKAARKAEKAK.

It belongs to the eukaryotic ribosomal protein eL24 family. As to quaternary structure, component of the large ribosomal subunit (LSU). Mature yeast ribosomes consist of a small (40S) and a large (60S) subunit. The 40S small subunit contains 1 molecule of ribosomal RNA (18S rRNA) and 33 different proteins (encoded by 57 genes). The large 60S subunit contains 3 rRNA molecules (25S, 5.8S and 5S rRNA) and 46 different proteins (encoded by 81 genes).

The protein resides in the cytoplasm. In terms of biological role, component of the ribosome, a large ribonucleoprotein complex responsible for the synthesis of proteins in the cell. The small ribosomal subunit (SSU) binds messenger RNAs (mRNAs) and translates the encoded message by selecting cognate aminoacyl-transfer RNA (tRNA) molecules. The large subunit (LSU) contains the ribosomal catalytic site termed the peptidyl transferase center (PTC), which catalyzes the formation of peptide bonds, thereby polymerizing the amino acids delivered by tRNAs into a polypeptide chain. The nascent polypeptides leave the ribosome through a tunnel in the LSU and interact with protein factors that function in enzymatic processing, targeting, and the membrane insertion of nascent chains at the exit of the ribosomal tunnel. The sequence is that of Large ribosomal subunit protein eL24B from Saccharomyces cerevisiae (strain ATCC 204508 / S288c) (Baker's yeast).